Here is a 432-residue protein sequence, read N- to C-terminus: Diaminopimelate decarboxylase (432 aa).

Lys-66 carries the N6-(pyridoxal phosphate)lysine modification. Residues Gly-248 and 290-293 (EPGR) contribute to the pyridoxal 5'-phosphate site. The substrate site is built by Arg-293, Arg-330, and Tyr-334. Cys-361 acts as the Proton donor in catalysis. The substrate site is built by Glu-362 and Tyr-390. Tyr-390 contributes to the pyridoxal 5'-phosphate binding site.

This sequence belongs to the Orn/Lys/Arg decarboxylase class-II family. LysA subfamily. In terms of assembly, homodimer. Pyridoxal 5'-phosphate is required as a cofactor.

The catalysed reaction is meso-2,6-diaminopimelate + H(+) = L-lysine + CO2. Its pathway is amino-acid biosynthesis; L-lysine biosynthesis via DAP pathway; L-lysine from DL-2,6-diaminopimelate: step 1/1. Specifically catalyzes the decarboxylation of meso-diaminopimelate (meso-DAP) to L-lysine. This Bacillus methanolicus protein is Diaminopimelate decarboxylase.